Reading from the N-terminus, the 465-residue chain is Cysteine--tRNA ligase (465 aa).

Cys-29 is a binding site for Zn(2+). The 'HIGH' region signature appears at 31 to 41; the sequence is PTVYNYIHIGN. Cys-209, His-234, and Glu-238 together coordinate Zn(2+). The 'KMSKS' region motif lies at 266 to 270; sequence KMSKS. Residue Lys-269 participates in ATP binding. Ser-270 carries the post-translational modification Phosphoserine.

It belongs to the class-I aminoacyl-tRNA synthetase family. In terms of assembly, monomer. Zn(2+) is required as a cofactor.

It localises to the cytoplasm. It carries out the reaction tRNA(Cys) + L-cysteine + ATP = L-cysteinyl-tRNA(Cys) + AMP + diphosphate. The polypeptide is Cysteine--tRNA ligase (Bacillus thuringiensis (strain Al Hakam)).